The following is a 270-amino-acid chain: MSTTSREDAVYLAKLAEQAERYEGMVENMKSVASTDQELTVEERNLLSVAYKNVIGARRASWRIVSSIEQKEESKGNTAQVELIKEYRQKIEQELDTICQDILTVLEKHLIPNAASAESKVFYYKMKGDYYRYLAEFAVGEKRQHSADQSLEGYKAASEIATAELAPTHPIRLGLALNFSVFYYEILNSPDRACYLAKQAFDEAISELDSLSEESYKDSTLIMQLLRDNLTLWTSDAEYSAAAAGGNTEGAQENAPSNAPEGEAEPKADA.

Ser-34 and Ser-66 each carry phosphoserine. A disordered region spans residues 242 to 270; that stretch reads AAAGGNTEGAQENAPSNAPEGEAEPKADA.

Belongs to the 14-3-3 family. As to quaternary structure, homodimer. Binds preferentially to mei2 phosphorylated by ran1/pat1. Binds preferentially to cdc25 phosphorylated by srk1 during G2; the interaction is increased during osmotic stress. Interacts with byr2. Interacts with rad25.

The protein localises to the cytoplasm. Acts in cell cycle and stress checkpoint signaling by sequestering signal transducers regulated by the checkpoints. Required for the DNA damage checkpoint that ensures that DNA damage is repaired before mitosis is attempted. During environmental stress, sequesters srk1-phosphorylated cdc25 in the cytoplasm to delay the G2/M transition. Sequesters byr2 in the cytoplasm to prevent its translocation to the plasma membrane. Sequesters ran1/pat1-phosphorylated mei2 from its non-coding RNA activators (including meiRNA), to prevent meiotic induction in vegetative cells and to regulate meiosis I. The protein is Checkpoint signal transducer rad24 of Schizosaccharomyces pombe (strain 972 / ATCC 24843) (Fission yeast).